A 609-amino-acid polypeptide reads, in one-letter code: Glutamine--fructose-6-phosphate aminotransferase [isomerizing] (609 aa).

C2 acts as the Nucleophile; for GATase activity in catalysis. The Glutamine amidotransferase type-2 domain occupies 2–218 (CGIVGAVAQR…EGDIAEVTRR (217 aa)). 2 SIS domains span residues 286-426 (AAKL…LKGV) and 458-599 (LAED…VDQP). K604 functions as the For Fru-6P isomerization activity in the catalytic mechanism.

Homodimer.

The protein localises to the cytoplasm. It catalyses the reaction D-fructose 6-phosphate + L-glutamine = D-glucosamine 6-phosphate + L-glutamate. In terms of biological role, catalyzes the first step in hexosamine metabolism, converting fructose-6P into glucosamine-6P using glutamine as a nitrogen source. This chain is Glutamine--fructose-6-phosphate aminotransferase [isomerizing], found in Photorhabdus laumondii subsp. laumondii (strain DSM 15139 / CIP 105565 / TT01) (Photorhabdus luminescens subsp. laumondii).